An 87-amino-acid chain; its full sequence is HssA/B-like protein 8 (87 aa).

The segment covering 1 to 22 has biased composition (polar residues); the sequence is MSILSALTSISNPMKSTKSSVA. The disordered stretch occupies residues 1–24; sequence MSILSALTSISNPMKSTKSSVANG.

It belongs to the hssA/B family.

The polypeptide is HssA/B-like protein 8 (hssl8) (Dictyostelium discoideum (Social amoeba)).